We begin with the raw amino-acid sequence, 139 residues long: Histone H2B.11 (139 aa).

The segment covering 1 to 39 has biased composition (basic and acidic residues); sequence MAPKAEKKPAEKKPVEEKAEKKPKAEKRVPGAKEGGGEK. The segment at 1-47 is disordered; the sequence is MAPKAEKKPAEKKPVEEKAEKKPKAEKRVPGAKEGGGEKKGKKKAKK. 2 positions are modified to N6-acetyllysine: K7 and K27. Residue K135 forms a Glycyl lysine isopeptide (Lys-Gly) (interchain with G-Cter in ubiquitin) linkage.

It belongs to the histone H2B family. In terms of assembly, the nucleosome is a histone octamer containing two molecules each of H2A, H2B, H3 and H4 assembled in one H3-H4 heterotetramer and two H2A-H2B heterodimers. The octamer wraps approximately 147 bp of DNA. Post-translationally, can be acetylated to form H2BK6ac and H2BK33ac. Monoubiquitinated by BRE1 to form H2BK143ub1 and deubiquitinated by UBP26. Required for heterochromatic histone H3 di- and trimethylation at H3K4me. May give a specific tag for epigenetic transcriptional activation.

Its subcellular location is the nucleus. The protein resides in the chromosome. Functionally, core component of nucleosome. Nucleosomes wrap and compact DNA into chromatin, limiting DNA accessibility to the cellular machineries which require DNA as a template. Histones thereby play a central role in transcription regulation, DNA repair, DNA replication and chromosomal stability. DNA accessibility is regulated via a complex set of post-translational modifications of histones, also called histone code, and nucleosome remodeling. This chain is Histone H2B.11 (H2B.11), found in Oryza sativa subsp. indica (Rice).